The following is a 329-amino-acid chain: Replication factor C small subunit 1 (329 aa).

Residue 44–51 coordinates ATP; that stretch reads GPPGTGKT.

Belongs to the activator 1 small subunits family. RfcS subfamily. As to quaternary structure, heteromultimer composed of small subunits (RfcS) and large subunits (RfcL).

Part of the RFC clamp loader complex which loads the PCNA sliding clamp onto DNA. This is Replication factor C small subunit 1 from Pyrobaculum aerophilum (strain ATCC 51768 / DSM 7523 / JCM 9630 / CIP 104966 / NBRC 100827 / IM2).